Here is a 399-residue protein sequence, read N- to C-terminus: Acetate kinase 2 (399 aa).

Residue N10 participates in Mg(2+) binding. An ATP-binding site is contributed by K17. Substrate is bound at residue R89. D146 acts as the Proton donor/acceptor in catalysis. ATP-binding positions include 206–210 (HLGNG), 281–283 (DCR), and 329–333 (GIGEN). Position 384 (E384) interacts with Mg(2+).

This sequence belongs to the acetokinase family. As to quaternary structure, homodimer. Mg(2+) serves as cofactor. Requires Mn(2+) as cofactor.

The protein localises to the cytoplasm. It catalyses the reaction acetate + ATP = acetyl phosphate + ADP. It participates in metabolic intermediate biosynthesis; acetyl-CoA biosynthesis; acetyl-CoA from acetate: step 1/2. Catalyzes the formation of acetyl phosphate from acetate and ATP. Can also catalyze the reverse reaction. This is Acetate kinase 2 from Neisseria meningitidis serogroup A / serotype 4A (strain DSM 15465 / Z2491).